A 431-amino-acid chain; its full sequence is Glutamate--tRNA ligase 1 (431 aa).

Positions 6 to 16 (PSPTGDMHIGN) match the 'HIGH' region motif. The 'KMSKS' region signature appears at 235–239 (KMSKR). Lys-238 serves as a coordination point for ATP.

This sequence belongs to the class-I aminoacyl-tRNA synthetase family. Glutamate--tRNA ligase type 1 subfamily. Monomer.

It localises to the cytoplasm. The enzyme catalyses tRNA(Glu) + L-glutamate + ATP = L-glutamyl-tRNA(Glu) + AMP + diphosphate. Functionally, catalyzes the attachment of glutamate to tRNA(Glu) in a two-step reaction: glutamate is first activated by ATP to form Glu-AMP and then transferred to the acceptor end of tRNA(Glu). This is Glutamate--tRNA ligase 1 from Campylobacter jejuni (strain RM1221).